The following is a 443-amino-acid chain: Histidinol dehydrogenase (443 aa).

NAD(+)-binding residues include Y133, Q191, and N214. The substrate site is built by S240, Q262, and H265. Residues Q262 and H265 each coordinate Zn(2+). Active-site proton acceptor residues include E329 and H330. Substrate-binding residues include H330, D363, E417, and H422. D363 contacts Zn(2+). H422 serves as a coordination point for Zn(2+).

Belongs to the histidinol dehydrogenase family. Homodimer. It depends on Zn(2+) as a cofactor.

The catalysed reaction is L-histidinol + 2 NAD(+) + H2O = L-histidine + 2 NADH + 3 H(+). Its pathway is amino-acid biosynthesis; L-histidine biosynthesis; L-histidine from 5-phospho-alpha-D-ribose 1-diphosphate: step 9/9. Functionally, catalyzes the sequential NAD-dependent oxidations of L-histidinol to L-histidinaldehyde and then to L-histidine. The protein is Histidinol dehydrogenase of Blochmanniella pennsylvanica (strain BPEN).